A 227-amino-acid polypeptide reads, in one-letter code: tRNA (guanine-N(1)-)-methyltransferase (227 aa).

Residues glycine 107 and 127 to 132 (LGDFIL) each bind S-adenosyl-L-methionine.

Belongs to the RNA methyltransferase TrmD family. As to quaternary structure, homodimer.

It is found in the cytoplasm. The catalysed reaction is guanosine(37) in tRNA + S-adenosyl-L-methionine = N(1)-methylguanosine(37) in tRNA + S-adenosyl-L-homocysteine + H(+). In terms of biological role, specifically methylates guanosine-37 in various tRNAs. This chain is tRNA (guanine-N(1)-)-methyltransferase, found in Mesomycoplasma hyopneumoniae (strain 7448) (Mycoplasma hyopneumoniae).